The sequence spans 174 residues: Adipose-secreted signaling protein (174 aa).

A2 carries the N-acetylalanine modification. T147 carries the phosphothreonine modification.

It belongs to the ADISSP family.

It is found in the secreted. Adipocyte-secreted protein (adipokine) that acts as a key regulator for white adipose tissue (WAT) thermogenesis and glucose homeostasis at least in part through activation of protein kinase A (PKA). The sequence is that of Adipose-secreted signaling protein from Rattus norvegicus (Rat).